Here is a 64-residue protein sequence, read N- to C-terminus: Large ribosomal subunit protein bL28 (64 aa).

This sequence belongs to the bacterial ribosomal protein bL28 family.

The chain is Large ribosomal subunit protein bL28 from Mycoplasmoides gallisepticum (strain R(low / passage 15 / clone 2)) (Mycoplasma gallisepticum).